Reading from the N-terminus, the 460-residue chain is GTPase Der (460 aa).

EngA-type G domains lie at 2 to 164 (QSII…HEEF) and 196 to 368 (IRVG…ENFT). Residues 8–15 (GKPNVGKS), 55–59 (DSGGL), 116–119 (NKVD), 202–209 (GRVNVGKS), 249–253 (DTAGI), and 313–316 (NKWD) each bind GTP. Residues 369 to 453 (QKIQTSKLNT…PLVIASRKKG (85 aa)) enclose the KH-like domain.

It belongs to the TRAFAC class TrmE-Era-EngA-EngB-Septin-like GTPase superfamily. EngA (Der) GTPase family. As to quaternary structure, associates with the 50S ribosomal subunit.

GTPase that plays an essential role in the late steps of ribosome biogenesis. This chain is GTPase Der, found in Campylobacter jejuni subsp. jejuni serotype O:23/36 (strain 81-176).